The chain runs to 150 residues: General odorant-binding protein 19d (150 aa).

The first 23 residues, 1 to 23 (MSHLVHLTVLLLVGILCLGATSA), serve as a signal peptide directing secretion. Cystine bridges form between Cys41-Cys72, Cys68-Cys126, and Cys116-Cys135.

Belongs to the PBP/GOBP family. In terms of tissue distribution, expressed in the antenna, mostly on the anterior surface of the third antennal segment. Also detected in the maxillary palps and in cells at the bases of the taste hairs on the proboscis and internal taste organs of the head.

Its subcellular location is the secreted. The polypeptide is General odorant-binding protein 19d (Obp19d) (Drosophila melanogaster (Fruit fly)).